The following is a 215-amino-acid chain: uncharacterized protein (215 aa).

The N-terminal stretch at 1-29 is a signal peptide; it reads MDKVQSGFLILFLFLMECQLHLCLPYADG. Topologically, residues 30 to 100 are extracellular; the sequence is LHPTGNITGL…IIRHRPALVK (71 aa). Residues 101–121 form a helical membrane-spanning segment; sequence VILISSVAFSIALICGMAISY. Residues 122–215 lie on the Cytoplasmic side of the membrane; the sequence is MIYRLAQAEE…ASHNGKMEDL (94 aa). A disordered region spans residues 191–215; sequence LKEEQNSVTENKTKNASHNGKMEDL. The span at 196-208 shows a compositional bias: polar residues; that stretch reads NSVTENKTKNASH.

It localises to the membrane. This is an uncharacterized protein from Homo sapiens (Human).